The sequence spans 1168 residues: Transcription-repair-coupling factor (1168 aa).

A Helicase ATP-binding domain is found at 633 to 794; it reads DMQKSRPMDR…MLGVRDLSVI (162 aa). 646 to 653 provides a ligand contact to ATP; it reads GDVGYGKT. The short motif at 747-750 is the DEEQ box element; the sequence is DEEQ. A Helicase C-terminal domain is found at 808–969; that stretch reads VLEQNMSFIK…GFKIAMRDLN (162 aa).

In the N-terminal section; belongs to the UvrB family. It in the C-terminal section; belongs to the helicase family. RecG subfamily.

It is found in the cytoplasm. Couples transcription and DNA repair by recognizing RNA polymerase (RNAP) stalled at DNA lesions. Mediates ATP-dependent release of RNAP and its truncated transcript from the DNA, and recruitment of nucleotide excision repair machinery to the damaged site. The sequence is that of Transcription-repair-coupling factor from Staphylococcus aureus (strain Mu50 / ATCC 700699).